Consider the following 228-residue polypeptide: Probable 26S proteasome regulatory subunit p28 (228 aa).

ANK repeat units follow at residues 1–30 (MSNY…SLLL), 35–64 (DGRI…NVNL), 71–100 (SGWT…KPDL), 106–135 (QGVT…SVRI), 139–168 (FNQI…SAVN), and 173–203 (QGWT…EYDL).

In terms of assembly, interacts with RPT3.

Its function is as follows. Acts as a chaperone during the assembly of the 26S proteasome, specifically of the 19S regulatory complex (RC) and appears to have an overlapping role with RPN14. The polypeptide is Probable 26S proteasome regulatory subunit p28 (NAS6) (Saccharomyces cerevisiae (strain ATCC 204508 / S288c) (Baker's yeast)).